A 431-amino-acid chain; its full sequence is Cortical fragment-lytic enzyme (431 aa).

2 consecutive LysM domains span residues 2 to 46 (QIYV…TIVI) and 51 to 95 (QFYD…RLYI). Residues 103–431 (IESNAYLEPR…QFNVVKKTFR (329 aa)) form the GH18 domain. Chitin contacts are provided by residues 148–149 (VA) and 174–177 (ENQA). The active-site Proton donor is E217. Chitin-binding positions include Y218, 280-283 (MTYE), and W406.

The protein belongs to the glycosyl hydrolase 18 family. Chitinase class II subfamily.

The protein localises to the spore coat. Functionally, N-acetylglucosaminidase involved in cortex peptidoglycan degradation during germination. Cleaves only partially degraded spore peptidoglycans. Recognizes muramic acid delta-lactam residues specific to spore peptidoglycans. This chain is Cortical fragment-lytic enzyme, found in Bacillus subtilis (strain 168).